Reading from the N-terminus, the 487-residue chain is b(0,+)-type amino acid transporter 1 (487 aa).

The span at 1 to 15 (MGDTGLRKRREDEKS) shows a compositional bias: basic and acidic residues. Residues 1–22 (MGDTGLRKRREDEKSIQSQEPK) form a disordered region. Residues 1–31 (MGDTGLRKRREDEKSIQSQEPKTTSLQKELG) lie on the Cytoplasmic side of the membrane. A Phosphoserine modification is found at S18. Residues 32–55 (LISGISIIVGTIIGSGIFVSPKSV) form a helical membrane-spanning segment. 43–47 (IIGSG) lines the L-arginine pocket. Topologically, residues 56 to 62 (LSNTEAV) are extracellular. A helical transmembrane segment spans residues 63-84 (GPCLIIWAACGVLATLGALCFA). The Cytoplasmic segment spans residues 85 to 110 (ELGTMITKSGGEYPYLMEAYGPIPAY). A helical transmembrane segment spans residues 111–137 (LFSWASLIVIKPTSFAIICLSFSEYVC). At 138–147 (APFYVGCKPP) the chain is on the extracellular side. Transmembrane regions (helical) follow at residues 148-169 (QIVV…NSLS) and 170-193 (VRLG…IIII). Residues 194–217 (SGLVLLAQGNTKNFDNSFEGAQLS) lie on the Extracellular side of the membrane. Residues 218 to 238 (VGAISLAFYNGLWAYDGWNQL) form a helical membrane-spanning segment. Residue D233 participates in L-arginine binding. Residues 239-251 (NYITEELRNPYRN) lie on the Cytoplasmic side of the membrane. The helical transmembrane segment at 252–274 (LPLAIIIGIPLVTACYILMNVSY) threads the bilayer. Topologically, residues 275–302 (FTVMTATELLQSQAVAVTFGDRVLYPAS) are extracellular. Residues 303-325 (WIVPLFVAFSTIGAANGTCFTAG) traverse the membrane as a helical segment. Residues 326–351 (RLIYVAGREGHMLKVLSYISVRRLTP) are Cytoplasmic-facing. 2 helical membrane passes run 352-370 (APAI…IPGD) and 371-391 (INSL…LTIL). Topologically, residues 392–410 (GLIVMRFTRKELERPIKVP) are cytoplasmic. A helical transmembrane segment spans residues 411-431 (VVIPVLMTLISVFLVLAPIIS). Over 432-434 (KPT) the chain is Extracellular. Residues 435 to 450 (WEYLYCVLFILSGLLF) form a helical membrane-spanning segment. Topologically, residues 451–487 (YFLFVHYKFGWAQKISKPITMHLQMLMEVVPPEEDPE) are cytoplasmic.

This sequence belongs to the amino acid-polyamine-organocation (APC) superfamily. In terms of assembly, disulfide-linked heterodimer composed of the catalytic light chain subunit SLC7A9 and the heavy chain subunit SLC3A1. The heterodimer is the minimal functional unit. Assembles in heterotetramers (dimers of heterodimers) and higher order oligomers; the oligomerization is mediated by SLC3A1 likely to prevent degradation and facilitate heteromer trafficking to the plasma membrane. Interacts with CAV1. Expressed in the brush border membrane in the kidney (at protein level). Kidney, small intestine, liver and placenta.

It is found in the apical cell membrane. The protein localises to the cell membrane. It carries out the reaction L-leucine(out) + L-arginine(in) = L-leucine(in) + L-arginine(out). It catalyses the reaction L-histidine(out) + L-arginine(in) = L-histidine(in) + L-arginine(out). The enzyme catalyses L-arginine(in) + L-phenylalanine(out) = L-arginine(out) + L-phenylalanine(in). The catalysed reaction is L-cysteine(out) + L-arginine(in) = L-cysteine(in) + L-arginine(out). It carries out the reaction L-cystine(out) + L-arginine(in) = L-cystine(in) + L-arginine(out). It catalyses the reaction L-lysine(out) + L-arginine(in) = L-lysine(in) + L-arginine(out). Its function is as follows. Associates with SLC3A1 to form a functional transporter complex that mediates the electrogenic exchange between cationic amino acids and neutral amino acids, with a stoichiometry of 1:1. Has system b(0,+)-like activity with high affinity for extracellular cationic amino acids and L-cystine and lower affinity for intracellular neutral amino acids. Substrate exchange is driven by high concentration of intracellular neutral amino acids and the intracellular reduction of L-cystine to L-cysteine. Required for reabsorption of L-cystine and dibasic amino acids across the brush border membrane in renal proximal tubules. The protein is b(0,+)-type amino acid transporter 1 of Homo sapiens (Human).